The chain runs to 787 residues: Pyridoxal-dependent decarboxylase domain-containing protein 1 (787 aa).

Basic and acidic residues predominate over residues 29–41 (EDSQRRTEEENGK). The disordered stretch occupies residues 29–52 (EDSQRRTEEENGKKLLSGDIPGPL). Residue serine 653 is modified to Phosphoserine. The segment at 683-787 (QGSGVTPPQT…PQVEEPESLR (105 aa)) is disordered. Positions 685-697 (SGVTPPQTPTGTR) are enriched in polar residues. 2 positions are modified to phosphothreonine: threonine 688 and threonine 692. 3 positions are modified to phosphoserine: serine 711, serine 719, and serine 723. Positions 735-745 (QSSGGQEASEA) are enriched in polar residues. A phosphoserine mark is found at serine 747 and serine 785. The segment covering 774–787 (QDDRPQVEEPESLR) has biased composition (basic and acidic residues).

It belongs to the group II decarboxylase family. Requires pyridoxal 5'-phosphate as cofactor.

This Bos taurus (Bovine) protein is Pyridoxal-dependent decarboxylase domain-containing protein 1 (PDXDC1).